The following is a 381-amino-acid chain: Chaperone protein DnaJ (381 aa).

In terms of domain architecture, J spans 5-73 (DYYEVLGVGK…EKKAAYDQYG (69 aa)). Residues 141–219 (GHEAQIRVPH…CHGQGKLKSQ (79 aa)) form a CR-type zinc finger. Zn(2+)-binding residues include C154, C157, C171, C174, C193, C196, C207, and C210. CXXCXGXG motif repeat units lie at residues 154 to 161 (CDHCHGNG), 171 to 178 (CPTCHGAG), 193 to 200 (CPKCHGSG), and 207 to 214 (CTKCHGQG). The tract at residues 357–381 (SVHEGGSRHSPQEQSWLDKVKSFFS) is disordered.

This sequence belongs to the DnaJ family. Homodimer. Zn(2+) serves as cofactor.

The protein localises to the cytoplasm. Functionally, participates actively in the response to hyperosmotic and heat shock by preventing the aggregation of stress-denatured proteins and by disaggregating proteins, also in an autonomous, DnaK-independent fashion. Unfolded proteins bind initially to DnaJ; upon interaction with the DnaJ-bound protein, DnaK hydrolyzes its bound ATP, resulting in the formation of a stable complex. GrpE releases ADP from DnaK; ATP binding to DnaK triggers the release of the substrate protein, thus completing the reaction cycle. Several rounds of ATP-dependent interactions between DnaJ, DnaK and GrpE are required for fully efficient folding. Also involved, together with DnaK and GrpE, in the DNA replication of plasmids through activation of initiation proteins. The sequence is that of Chaperone protein DnaJ from Cupriavidus necator (strain ATCC 17699 / DSM 428 / KCTC 22496 / NCIMB 10442 / H16 / Stanier 337) (Ralstonia eutropha).